The primary structure comprises 609 residues: tRNA uridine 5-carboxymethylaminomethyl modification enzyme MnmG (609 aa).

Residues 11–16 (GAGHAG), V123, and T178 contribute to the FAD site. Residue 270–284 (GPRYCPSIEDKVVRF) coordinates NAD(+). Q367 contacts FAD.

The protein belongs to the MnmG family. In terms of assembly, homodimer. Heterotetramer of two MnmE and two MnmG subunits. FAD serves as cofactor.

The protein resides in the cytoplasm. NAD-binding protein involved in the addition of a carboxymethylaminomethyl (cmnm) group at the wobble position (U34) of certain tRNAs, forming tRNA-cmnm(5)s(2)U34. This is tRNA uridine 5-carboxymethylaminomethyl modification enzyme MnmG from Mycoplasmopsis synoviae (strain 53) (Mycoplasma synoviae).